Reading from the N-terminus, the 637-residue chain is Transcription factor GLABRA 3 (637 aa).

Positions 437 to 486 (DETGNHAVLEKKRREKLNERFMTLRKIIPSINKIDKVSILDDTIEYLQEL) constitute a bHLH domain. The disordered stretch occupies residues 497–521 (RESTDTETRGTMTMKRKKPCDAGER). Residues 541–637 (NVGEAEPADT…EALQRVAWIC (97 aa)) are binding with MYB0/GL1 and MYB23.

As to quaternary structure, efficient DNA binding requires dimerization with another bHLH protein. Homodimer and heterodimer with BHLH2. Interacts directly with TTG1 and MYB0/GL1 to form a complex. Its interaction with TRY prevents MYB0/GL1 binding. Interacts with MYB75/PAP1, MYB90/PAP2, TT2, CPC, MYB23 and MYB66/WER. Interacts with MYB82. Mostly expressed in roots and flowers. Also present in stems and leaves, and, to a lower extent, in hypocotyls. Expressed in epidermal root hair cells (trichoblasts) and moves to root hairless cells (atrichoblasts) by a cell-to-cell movement through plasmodesmata (at protein level).

The protein resides in the nucleus. Functionally, transcription activator, when associated with MYB75/PAP1, MYB90/PAP2 or TT2. Involved in epidermal cell fate specification. Negatively regulates stomata formation, but, in association with TTG1 and MYB0/GL1, promotes trichome formation, branching and endoreplication. Also regulates trichome cell wall maturation. Together with MYB66/WER, promotes the formation of non-hair cells in root epidermis cells in the N position. Whereas together with CPC, promotes the formation of hair cells in root epidermis cells in the H position by inhibiting non-hair cell formation. Also seems to play a role in the activation of anthocyanin biosynthesis, probably together with MYB75/PAP1. Activates the transcription of GL2. The sequence is that of Transcription factor GLABRA 3 (GL3) from Arabidopsis thaliana (Mouse-ear cress).